The chain runs to 959 residues: MANPQEHLSCSSLPHLPLTENKTSGGRNELAAMGNHPSPKLPEDPQERGAIQSELMEITGSPISTTVLTSVSEDSRGQFENSVLQLREQDESEMTLSLGNSNTVDGENTNGPEDIKIQFSRSGSGSGGFLEGLFGCLRPVWNIIGKAYSTDYKLQQQDTWEVPFEEISELQWLGSGAQGAVFLGKFRAEEVAIKKVREQNETDIKHLRKLKHPNIIAFKGVCTQAPCYCIIMEYCAHGQLYEVLRAGRKITPRLLVDWSTGIASGMNYLHLHKIIHRDLKSPNVLVTHTDAVKISDFGTSKELSDKSTKMSFAGTVAWMAPEVIRNEPVSEKVDIWSFGVVLWELLTGEIPYKDVDSSAIIWGVGSNSLHLPVPSTCPDGFKILMKQTWQSKPRNRPSFRQTLMHLDIASADVLATPQETYFKSQAEWREEVKKHFEKIKSEGTCIHRLDEELIRRRREELRHALDIREHYERKLERANNLYMELSAIMLQLEMREKELLKREQAVEKKYPGTYKRHPVRPIIHPNAMEKLMKRKGVPHKAGVQTKRPDLLRSEGIPSTEAVPTASPLSGSPKMSTASSRSRYRSKPRHRRGNSRGSHSDFAAILKTQPAQENSPHPTYMHHTQAQCASVHQHNPLQQQYQQIPPAQPQSRHPRLNAHGQDIATCANNLRYFGPAAALRSPLSNHAQRQMPGSSPDLISTAMAADWRNSELDQDQVGPWGCCQAEPYDPCFQCRPEHSGSLDVPTTEPVGRSPDLSSSPAHNPLSGNAQGSERTGANGFSGCQSGISHQFTPPMLPQKTRPLQKSGDDSSEEEGEVDSEVEFPRRQRPHRCISSYQSYSTFSSENFSVSDGEEGNTSDHSNSPDESANRRQDRLAETLDDLLSQTPEAPIEISSHSDGLSDKECAVRRVKTQMSLGKLCAEERGYENPVQFGDSDCDSSEGECSDATVRTSKNYSSATW.

Positions 1-47 are disordered; that stretch reads MANPQEHLSCSSLPHLPLTENKTSGGRNELAAMGNHPSPKLPEDPQE. The span at 7–18 shows a compositional bias: low complexity; sequence HLSCSSLPHLPL. The Protein kinase domain maps to 167–408; that stretch reads ISELQWLGSG…FRQTLMHLDI (242 aa). Residues 173–181 and Lys-194 contribute to the ATP site; that span reads LGSGAQGAV. The active-site Proton acceptor is Asp-278. Leucine-zipper regions lie at residues 432-453 and 485-506; these read VKKH…DEEL and LSAI…EQAV. 4 disordered regions span residues 533–599, 739–828, 842–902, and 927–959; these read KRKG…GSHS, GSLD…RQRP, SSEN…LSDK, and NPVQ…SATW. The segment covering 566–577 has biased composition (polar residues); the sequence is SPLSGSPKMSTA. The span at 581 to 593 shows a compositional bias: basic residues; it reads SRYRSKPRHRRGN. Polar residues-rich tracts occupy residues 754–774 and 780–790; these read DLSS…SERT and SGCQSGISHQF. Over residues 808–820 the composition is skewed to acidic residues; sequence DSSEEEGEVDSEV. The segment covering 866-876 has biased composition (basic and acidic residues); that stretch reads SANRRQDRLAE. Residues 934–943 show a composition bias toward acidic residues; that stretch reads SDCDSSEGEC. A compositionally biased stretch (polar residues) spans 947–959; that stretch reads TVRTSKNYSSATW.

Belongs to the protein kinase superfamily. STE Ser/Thr protein kinase family. MAP kinase kinase kinase subfamily. In terms of assembly, homodimer; forms dimers through the leucine-zipper motif. Interacts with the C-terminus of MAPK8IP1 through the kinase catalytic domain. Binds PRDX3. Associates with the IKK complex through the kinase domain. It depends on Mg(2+) as a cofactor. Autophosphorylated on serine and threonine residues.

The protein resides in the cytoplasm. The protein localises to the membrane. It carries out the reaction L-seryl-[protein] + ATP = O-phospho-L-seryl-[protein] + ADP + H(+). It catalyses the reaction L-threonyl-[protein] + ATP = O-phospho-L-threonyl-[protein] + ADP + H(+). Its activity is regulated as follows. Activated by autophosphorylation and homodimerization. Functionally, activates the JUN N-terminal pathway through activation of the MAP kinase kinase MAP2K7. Acts synergistically with PRDX3 to regulate the activation of NF-kappa-B in the cytosol. This activation is kinase-dependent and involves activating the IKK complex, the IKBKB-containing complex that phosphorylates inhibitors of NF-kappa-B. This chain is Mitogen-activated protein kinase kinase kinase 13 (Map3k13), found in Mus musculus (Mouse).